The primary structure comprises 201 residues: 3-isopropylmalate dehydratase small subunit (201 aa).

It belongs to the LeuD family. LeuD type 1 subfamily. Heterodimer of LeuC and LeuD.

It carries out the reaction (2R,3S)-3-isopropylmalate = (2S)-2-isopropylmalate. Its pathway is amino-acid biosynthesis; L-leucine biosynthesis; L-leucine from 3-methyl-2-oxobutanoate: step 2/4. In terms of biological role, catalyzes the isomerization between 2-isopropylmalate and 3-isopropylmalate, via the formation of 2-isopropylmaleate. This Escherichia fergusonii (strain ATCC 35469 / DSM 13698 / CCUG 18766 / IAM 14443 / JCM 21226 / LMG 7866 / NBRC 102419 / NCTC 12128 / CDC 0568-73) protein is 3-isopropylmalate dehydratase small subunit.